Here is a 479-residue protein sequence, read N- to C-terminus: MRGDSFIWSLTTAASLLYATVESLQVVKRDNPSIVGFDIERFQVAKPVHRDIIAKRASGKTVSQDLDNQTIRAHIDTGSSDLWVNTDDSQFCSSRRSPCREGGTFDSSSSSTYQLVSNDFNISYVDGSGASGDYVTDVIEVGGIQLKEFQFAIGHTSSSPLGVLGIGYEAGEALVSRFGDESYPNLPAALVKAGHIRSNAYSLWLNDLSASRGQILFGGVDTGKFEGKLQTVPVLHTSGGDYTSLVIALTSVGIRTASEGSLDTFPAQPVAVAMDSGSSLSYLPDALAAKIYNSIDAVFDPSNNLAFVPCSMVNDDRKLVFTFSSPQITVGMDELVIDLGPDANGNEATFRDGSKACVFGIAPAGRSISILGDTVLRSAYLVYDLDNNEISIAPTRFNSTVTNIMEIGTGKNSVPDATGVPNAVTSAPITQATGLSGIETGVPGARPTSRGAAPTMRPDVTFGVAAAGLAGAGILFAFM.

Positions 1-19 (MRGDSFIWSLTTAASLLYA) are cleaved as a signal peptide. Residues 58 to 393 (SGKTVSQDLD…DLDNNEISIA (336 aa)) form the Peptidase A1 domain. Asn-68 carries N-linked (GlcNAc...) asparagine glycosylation. Residue Asp-76 is part of the active site. Asn-121 is a glycosylation site (N-linked (GlcNAc...) asparagine). Asp-275 is a catalytic residue. The N-linked (GlcNAc...) asparagine glycan is linked to Asn-398. A disordered region spans residues 435–454 (LSGIETGVPGARPTSRGAAP). A lipid anchor (GPI-anchor amidated glycine) is attached at Gly-451. Residues 452–479 (AAPTMRPDVTFGVAAAGLAGAGILFAFM) constitute a propeptide, removed in mature form.

It belongs to the peptidase A1 family.

It localises to the cell membrane. Functionally, probable GPI-anchored aspartic-type endopeptidase which contributes to virulence. This chain is Probable aspartic-type endopeptidase OPSB (OPSB), found in Arthroderma otae (strain ATCC MYA-4605 / CBS 113480) (Microsporum canis).